The following is a 131-amino-acid chain: Small ribosomal subunit protein uS11 (131 aa).

Belongs to the universal ribosomal protein uS11 family. As to quaternary structure, part of the 30S ribosomal subunit. Interacts with proteins S7 and S18. Binds to IF-3.

Functionally, located on the platform of the 30S subunit, it bridges several disparate RNA helices of the 16S rRNA. Forms part of the Shine-Dalgarno cleft in the 70S ribosome. The chain is Small ribosomal subunit protein uS11 from Exiguobacterium sibiricum (strain DSM 17290 / CCUG 55495 / CIP 109462 / JCM 13490 / 255-15).